Here is a 430-residue protein sequence, read N- to C-terminus: 3-phosphoshikimate 1-carboxyvinyltransferase (430 aa).

The 3-phosphoshikimate site is built by K20, S21, and R25. K20 lines the phosphoenolpyruvate pocket. The phosphoenolpyruvate site is built by G90 and R118. 6 residues coordinate 3-phosphoshikimate: S163, S164, Q165, S191, D311, and K338. A phosphoenolpyruvate-binding site is contributed by Q165. Residue D311 is the Proton acceptor of the active site. Residues R342 and R383 each contribute to the phosphoenolpyruvate site.

The protein belongs to the EPSP synthase family. Monomer.

It localises to the cytoplasm. The catalysed reaction is 3-phosphoshikimate + phosphoenolpyruvate = 5-O-(1-carboxyvinyl)-3-phosphoshikimate + phosphate. It participates in metabolic intermediate biosynthesis; chorismate biosynthesis. Functionally, catalyzes the transfer of the enolpyruvyl moiety of phosphoenolpyruvate (PEP) to the 5-hydroxyl of shikimate-3-phosphate (S3P) to produce enolpyruvyl shikimate-3-phosphate and inorganic phosphate. This Methanosarcina acetivorans (strain ATCC 35395 / DSM 2834 / JCM 12185 / C2A) protein is 3-phosphoshikimate 1-carboxyvinyltransferase.